Here is a 127-residue protein sequence, read N- to C-terminus: Aspartate 1-decarboxylase (127 aa).

Catalysis depends on S25, which acts as the Schiff-base intermediate with substrate; via pyruvic acid. S25 carries the pyruvic acid (Ser) modification. T57 contributes to the substrate binding site. Catalysis depends on Y58, which acts as the Proton donor. Substrate is bound at residue 73–75 (GAA).

The protein belongs to the PanD family. As to quaternary structure, heterooctamer of four alpha and four beta subunits. The cofactor is pyruvate. Post-translationally, is synthesized initially as an inactive proenzyme, which is activated by self-cleavage at a specific serine bond to produce a beta-subunit with a hydroxyl group at its C-terminus and an alpha-subunit with a pyruvoyl group at its N-terminus.

Its subcellular location is the cytoplasm. It carries out the reaction L-aspartate + H(+) = beta-alanine + CO2. It functions in the pathway cofactor biosynthesis; (R)-pantothenate biosynthesis; beta-alanine from L-aspartate: step 1/1. In terms of biological role, catalyzes the pyruvoyl-dependent decarboxylation of aspartate to produce beta-alanine. The polypeptide is Aspartate 1-decarboxylase (Bacillus cereus (strain B4264)).